A 269-amino-acid chain; its full sequence is 4-hydroxy-tetrahydrodipicolinate reductase (269 aa).

NAD(+) contacts are provided by residues 8 to 13, glutamate 34, 98 to 100, and 122 to 125; these read GASGRM, GTT, and APNM. Residue histidine 155 is the Proton donor/acceptor of the active site. Histidine 156 provides a ligand contact to (S)-2,3,4,5-tetrahydrodipicolinate. Residue lysine 159 is the Proton donor of the active site. 165–166 is a (S)-2,3,4,5-tetrahydrodipicolinate binding site; sequence GT.

It belongs to the DapB family.

The protein localises to the cytoplasm. The enzyme catalyses (S)-2,3,4,5-tetrahydrodipicolinate + NAD(+) + H2O = (2S,4S)-4-hydroxy-2,3,4,5-tetrahydrodipicolinate + NADH + H(+). It catalyses the reaction (S)-2,3,4,5-tetrahydrodipicolinate + NADP(+) + H2O = (2S,4S)-4-hydroxy-2,3,4,5-tetrahydrodipicolinate + NADPH + H(+). Its pathway is amino-acid biosynthesis; L-lysine biosynthesis via DAP pathway; (S)-tetrahydrodipicolinate from L-aspartate: step 4/4. Its function is as follows. Catalyzes the conversion of 4-hydroxy-tetrahydrodipicolinate (HTPA) to tetrahydrodipicolinate. The sequence is that of 4-hydroxy-tetrahydrodipicolinate reductase from Desulfotalea psychrophila (strain LSv54 / DSM 12343).